We begin with the raw amino-acid sequence, 92 residues long: Transcriptional regulator WhiB1 (92 aa).

Residues 12 to 74 (ACRDKDPELF…GGLSEDERRA (63 aa)) enclose the 4Fe-4S Wbl-type domain. [4Fe-4S] cluster contacts are provided by cysteine 13, cysteine 41, cysteine 44, and cysteine 50.

Belongs to the WhiB family. The cofactor is [4Fe-4S] cluster. Post-translationally, the Fe-S cluster can be nitrosylated by nitric oxide (NO). In terms of processing, upon Fe-S cluster removal intramolecular disulfide bonds are formed.

Its subcellular location is the cytoplasm. In terms of biological role, acts as a transcriptional regulator. Probably redox-responsive. The apo- but not holo-form probably binds DNA. The polypeptide is Transcriptional regulator WhiB1 (whiB1) (Bifidobacterium longum (strain NCC 2705)).